The primary structure comprises 161 residues: Putative pre-16S rRNA nuclease (161 aa).

It belongs to the YqgF nuclease family.

Its subcellular location is the cytoplasm. In terms of biological role, could be a nuclease involved in processing of the 5'-end of pre-16S rRNA. This chain is Putative pre-16S rRNA nuclease, found in Bradyrhizobium diazoefficiens (strain JCM 10833 / BCRC 13528 / IAM 13628 / NBRC 14792 / USDA 110).